We begin with the raw amino-acid sequence, 352 residues long: MALIVDKHRPRSLDALTYHTELSERLRSLAQSGDFPHLLVYGPSGAGKKTRIVATLKELYGPGVEKIKIDARVFQTSSNRKLEFNIVASVYHLEITPSDVGNYDRVVVQDLLKEVAQTQQVDLSAKQRFKVVVINEADHLTRDAQAALRRTMEKYSPNLRLILLANSTANIIAPIRSRCLLVRVAAPTHKEICDVLASSAKKEGWPIVKGLHQRIAEESGRNLRRALLMYEAVYAQNEKVTDSTPIPPPDWEALIGQIAKEIMEEHTPARILQVRAKLYDLLTHCIPATIILKTLTFKLIPLIDDALKADVIYWSAFYEHRIRTGTKVIFHLEAFVAKFMRIFEMYLMSMDL.

This sequence belongs to the activator 1 small subunits family. As to quaternary structure, heteropentamer of subunits rfc1, rfc2, rfc3, rfc4 and rfc5 that forms a complex with PCNA in the presence of ATP.

The protein resides in the nucleus. The elongation of primed DNA templates by DNA polymerase delta and epsilon requires the action of the accessory proteins proliferating cell nuclear antigen (PCNA) and activator 1. This chain is Replication factor C subunit 5, found in Neurospora crassa (strain ATCC 24698 / 74-OR23-1A / CBS 708.71 / DSM 1257 / FGSC 987).